Reading from the N-terminus, the 84-residue chain is Small ribosomal subunit protein bS16 (84 aa).

It belongs to the bacterial ribosomal protein bS16 family.

The polypeptide is Small ribosomal subunit protein bS16 (Ralstonia pickettii (strain 12J)).